The primary structure comprises 443 residues: ATP-dependent protease ATPase subunit HslU (443 aa).

ATP-binding positions include Ile-20, Gly-62–Glu-67, Asp-255, Glu-321, and Arg-393.

It belongs to the ClpX chaperone family. HslU subfamily. In terms of assembly, a double ring-shaped homohexamer of HslV is capped on each side by a ring-shaped HslU homohexamer. The assembly of the HslU/HslV complex is dependent on binding of ATP.

The protein resides in the cytoplasm. Its function is as follows. ATPase subunit of a proteasome-like degradation complex; this subunit has chaperone activity. The binding of ATP and its subsequent hydrolysis by HslU are essential for unfolding of protein substrates subsequently hydrolyzed by HslV. HslU recognizes the N-terminal part of its protein substrates and unfolds these before they are guided to HslV for hydrolysis. This chain is ATP-dependent protease ATPase subunit HslU, found in Helicobacter acinonychis (strain Sheeba).